The primary structure comprises 375 residues: Hemolysin BL-binding component (375 aa).

The signal sequence occupies residues 1-31; that stretch reads MIKKIPYKLLAVSTLLTITTANVVSPVATFA. The helical transmembrane segment at 232–252 threads the bilayer; that stretch reads FNVMKGAILGLPIIGGIIVGV.

Composed of a binding component, B, and two lytic components, L1 and L2. All three subunits act synergically to cause hemolysis.

The protein resides in the secreted. The protein localises to the host cell membrane. Cytotoxic protein, part of the enterotoxin complex. Responsible for binding to erythrocytes. This enterotoxin is thought to be the cause of the diarrheal form of gastroenteritis caused by food-borne strains of B.cereus. The chain is Hemolysin BL-binding component (hblA) from Bacillus cereus.